Consider the following 360-residue polypeptide: MTTIQQQRSSLLKGWPQFCEWVTSTNNRIYVGWFGVLMIPCLLAAAACFIVAFIAAPPVDIDGIREPVAGSFLYGNNIISGAVVPSSNAIGLHFYPIWEAATVDEWLYNGGPYQLVIFHFLIGISAYMGRQWELSYRLGMRPWICVAYSAPVSAAFAVFLVYPFGQGSFSDGMPLGISGTFNFMFVFQAEHNILMHPFHMAGVAGMFGGSLFSAMHGSLVTSSLIRETTETESQNYGYKFGQEEETYNIVAAHGYFGRLIFQYASFNNSRSLHFFLAVFPVVCVWLTSMGICTMAFNLNGFNFNQSVVDANGKIVPTWGDVLNRANLGMEVMHERNAHNFPLDLAAAESTTVALSAPAIG.

Helical transmembrane passes span Tyr30–Ala47, His119–Leu134, and Trp143–Ala157. His119 lines the chlorophyll a pocket. Pheophytin a is bound at residue Tyr127. [CaMn4O5] cluster is bound by residues Asp171 and Glu190. A helical transmembrane segment spans residues Phe198–Leu219. His199 contributes to the chlorophyll a binding site. A quinone-binding positions include His216 and Ser265–Phe266. Residue His216 coordinates Fe cation. His273 contacts Fe cation. Residues Phe275–Met289 traverse the membrane as a helical segment. Residues His333, Glu334, Asp343, and Ala345 each coordinate [CaMn4O5] cluster. The propeptide occupies Ala346–Gly360.

This sequence belongs to the reaction center PufL/M/PsbA/D family. PSII is composed of 1 copy each of membrane proteins PsbA, PsbB, PsbC, PsbD, PsbE, PsbF, PsbH, PsbI, PsbJ, PsbK, PsbL, PsbM, PsbT, PsbX, PsbY, Psb30/Ycf12, peripheral proteins PsbO, CyanoQ (PsbQ), PsbU, PsbV and a large number of cofactors. It forms dimeric complexes. The D1/D2 heterodimer binds P680, chlorophylls that are the primary electron donor of PSII, and subsequent electron acceptors. It shares a non-heme iron and each subunit binds pheophytin, quinone, additional chlorophylls, carotenoids and lipids. D1 provides most of the ligands for the Mn4-Ca-O5 cluster of the oxygen-evolving complex (OEC). There is also a Cl(-1) ion associated with D1 and D2, which is required for oxygen evolution. The PSII complex binds additional chlorophylls, carotenoids and specific lipids. is required as a cofactor. In terms of processing, tyr-162 forms a radical intermediate that is referred to as redox-active TyrZ, YZ or Y-Z. Post-translationally, C-terminally processed by CtpA; processing is essential to allow assembly of the oxygen-evolving complex and thus photosynthetic growth.

Its subcellular location is the cellular thylakoid membrane. It carries out the reaction 2 a plastoquinone + 4 hnu + 2 H2O = 2 a plastoquinol + O2. Its function is as follows. Photosystem II (PSII) is a light-driven water:plastoquinone oxidoreductase that uses light energy to abstract electrons from H(2)O, generating O(2) and a proton gradient subsequently used for ATP formation. It consists of a core antenna complex that captures photons, and an electron transfer chain that converts photonic excitation into a charge separation. The D1/D2 (PsbA/PsbD) reaction center heterodimer binds P680, the primary electron donor of PSII as well as several subsequent electron acceptors. This is Photosystem II protein D1 from Prochlorococcus marinus (strain MIT 9312).